The primary structure comprises 238 residues: Probable transcriptional regulatory protein MGAS2096_Spy0287 (238 aa).

It belongs to the TACO1 family. YeeN subfamily.

Its subcellular location is the cytoplasm. This is Probable transcriptional regulatory protein MGAS2096_Spy0287 from Streptococcus pyogenes serotype M12 (strain MGAS2096).